Here is a 335-residue protein sequence, read N- to C-terminus: Ketol-acid reductoisomerase (NADP(+)) 2 (335 aa).

A KARI N-terminal Rossmann domain is found at 1 to 180 (MKTYYEKDAN…GCTRAGVIET (180 aa)). NADP(+) is bound by residues 24 to 27 (YGSQ), Arg-47, Ser-51, and 81 to 84 (DEQQ). The active site involves His-106. Gly-132 serves as a coordination point for NADP(+). One can recognise a KARI C-terminal knotted domain in the interval 181–326 (TFQEETETDL…AELREMMSWI (146 aa)). 4 residues coordinate Mg(2+): Asp-189, Glu-193, Glu-225, and Glu-229. Ser-250 is a binding site for substrate.

It belongs to the ketol-acid reductoisomerase family. It depends on Mg(2+) as a cofactor.

The enzyme catalyses (2R)-2,3-dihydroxy-3-methylbutanoate + NADP(+) = (2S)-2-acetolactate + NADPH + H(+). The catalysed reaction is (2R,3R)-2,3-dihydroxy-3-methylpentanoate + NADP(+) = (S)-2-ethyl-2-hydroxy-3-oxobutanoate + NADPH + H(+). The protein operates within amino-acid biosynthesis; L-isoleucine biosynthesis; L-isoleucine from 2-oxobutanoate: step 2/4. It participates in amino-acid biosynthesis; L-valine biosynthesis; L-valine from pyruvate: step 2/4. Functionally, involved in the biosynthesis of branched-chain amino acids (BCAA). Catalyzes an alkyl-migration followed by a ketol-acid reduction of (S)-2-acetolactate (S2AL) to yield (R)-2,3-dihydroxy-isovalerate. In the isomerase reaction, S2AL is rearranged via a Mg-dependent methyl migration to produce 3-hydroxy-3-methyl-2-ketobutyrate (HMKB). In the reductase reaction, this 2-ketoacid undergoes a metal-dependent reduction by NADPH to yield (R)-2,3-dihydroxy-isovalerate. This Bacillus cereus (strain ATCC 10987 / NRS 248) protein is Ketol-acid reductoisomerase (NADP(+)) 2.